Consider the following 103-residue polypeptide: MAAQVNGDDNDRQITLIDDQGNEELYEVLFTFHSDDYDKSYVLLYPAAVGDDEDIEVQAFSYDADDTGDVTSSDLHEIESDDEWNMVQGVLNTFLDDDRLSGK.

It belongs to the UPF0473 family.

This is UPF0473 protein LBA0420 from Lactobacillus acidophilus (strain ATCC 700396 / NCK56 / N2 / NCFM).